Consider the following 200-residue polypeptide: Methylthioribulose-1-phosphate dehydratase-like protein (200 aa).

Belongs to the aldolase class II family. MtnB subfamily.

The protein is Methylthioribulose-1-phosphate dehydratase-like protein of Schizosaccharomyces pombe (strain 972 / ATCC 24843) (Fission yeast).